We begin with the raw amino-acid sequence, 396 residues long: Elongation factor Tu 2 (396 aa).

Residues 10 to 206 (KPHINVGTIG…AMDAHIPQPE (197 aa)) form the tr-type G domain. The tract at residues 19–26 (GHVDHGKT) is G1. Residue 19-26 (GHVDHGKT) participates in GTP binding. Thr-26 serves as a coordination point for Mg(2+). The segment at 60–64 (GITIA) is G2. Residues 81–84 (DCPG) are G3. Residues 81–85 (DCPGH) and 136–139 (NKAD) contribute to the GTP site. Positions 136–139 (NKAD) are G4. The tract at residues 174 to 176 (SAL) is G5.

This sequence belongs to the TRAFAC class translation factor GTPase superfamily. Classic translation factor GTPase family. EF-Tu/EF-1A subfamily. As to quaternary structure, monomer.

Its subcellular location is the cytoplasm. It catalyses the reaction GTP + H2O = GDP + phosphate + H(+). Functionally, GTP hydrolase that promotes the GTP-dependent binding of aminoacyl-tRNA to the A-site of ribosomes during protein biosynthesis. This Halorhodospira halophila (strain DSM 244 / SL1) (Ectothiorhodospira halophila (strain DSM 244 / SL1)) protein is Elongation factor Tu 2.